Consider the following 447-residue polypeptide: Phosphoglucosamine mutase (447 aa).

S100 functions as the Phosphoserine intermediate in the catalytic mechanism. Mg(2+)-binding residues include S100, D239, D241, and D243. S100 is subject to Phosphoserine.

Belongs to the phosphohexose mutase family. Mg(2+) serves as cofactor. Activated by phosphorylation.

The catalysed reaction is alpha-D-glucosamine 1-phosphate = D-glucosamine 6-phosphate. Functionally, catalyzes the conversion of glucosamine-6-phosphate to glucosamine-1-phosphate. This chain is Phosphoglucosamine mutase, found in Thermoanaerobacter pseudethanolicus (strain ATCC 33223 / 39E) (Clostridium thermohydrosulfuricum).